We begin with the raw amino-acid sequence, 189 residues long: ATP synthase subunit delta (189 aa).

Belongs to the ATPase delta chain family. F-type ATPases have 2 components, F(1) - the catalytic core - and F(0) - the membrane proton channel. F(1) has five subunits: alpha(3), beta(3), gamma(1), delta(1), epsilon(1). F(0) has three main subunits: a(1), b(2) and c(10-14). The alpha and beta chains form an alternating ring which encloses part of the gamma chain. F(1) is attached to F(0) by a central stalk formed by the gamma and epsilon chains, while a peripheral stalk is formed by the delta and b chains.

It localises to the cell inner membrane. Functionally, f(1)F(0) ATP synthase produces ATP from ADP in the presence of a proton or sodium gradient. F-type ATPases consist of two structural domains, F(1) containing the extramembraneous catalytic core and F(0) containing the membrane proton channel, linked together by a central stalk and a peripheral stalk. During catalysis, ATP synthesis in the catalytic domain of F(1) is coupled via a rotary mechanism of the central stalk subunits to proton translocation. This protein is part of the stalk that links CF(0) to CF(1). It either transmits conformational changes from CF(0) to CF(1) or is implicated in proton conduction. The polypeptide is ATP synthase subunit delta (Methylorubrum extorquens (strain PA1) (Methylobacterium extorquens)).